The following is a 312-amino-acid chain: Acetylglutamate kinase (312 aa).

Residues 69 to 70 (GG), Arg-91, and Asn-191 contribute to the substrate site.

The protein belongs to the acetylglutamate kinase family. ArgB subfamily.

The protein localises to the cytoplasm. The enzyme catalyses N-acetyl-L-glutamate + ATP = N-acetyl-L-glutamyl 5-phosphate + ADP. The protein operates within amino-acid biosynthesis; L-arginine biosynthesis; N(2)-acetyl-L-ornithine from L-glutamate: step 2/4. Functionally, catalyzes the ATP-dependent phosphorylation of N-acetyl-L-glutamate. This chain is Acetylglutamate kinase, found in Streptomyces griseus subsp. griseus (strain JCM 4626 / CBS 651.72 / NBRC 13350 / KCC S-0626 / ISP 5235).